Consider the following 204-residue polypeptide: Dof zinc finger protein DOF3.1 (204 aa).

The disordered stretch occupies residues 1–25; that stretch reads MQDPAAYYQTMMAKQQQQQQPQFAE. The segment at 29–83 adopts a Dof-type zinc-finger fold; that stretch reads LKCPRCDSPNTKFCYYNNYNLSQPRHFCKSCRRYWTKGGALRNVPVGGGSRKNAT. Zn(2+)-binding residues include cysteine 31, cysteine 34, cysteine 56, and cysteine 59. 2 disordered regions span residues 70–128 and 182–204; these read RNVP…TRML and RTEP…AEKN. Residues 84-102 are compositionally biased toward low complexity; sequence KRSTSSSSSASSPSNSSQN. Over residues 106–124 the composition is skewed to basic and acidic residues; it reads KNPDPDPDPRNSQKPDLDP.

The protein localises to the nucleus. Functionally, transcription factor that binds specifically to a 5'-AA[AG]G-3' consensus core sequence. The polypeptide is Dof zinc finger protein DOF3.1 (DOF3.1) (Arabidopsis thaliana (Mouse-ear cress)).